The chain runs to 158 residues: Large ribosomal subunit protein uL16 (158 aa).

This sequence belongs to the universal ribosomal protein uL16 family. Part of the 50S ribosomal subunit.

Binds 23S rRNA and is also seen to make contacts with the A and possibly P site tRNAs. This chain is Large ribosomal subunit protein uL16, found in Synechococcus sp. (strain CC9902).